A 323-amino-acid polypeptide reads, in one-letter code: 3-dehydroquinate synthase (323 aa).

The protein belongs to the archaeal-type DHQ synthase family.

The enzyme catalyses 2-amino-2,3,7-trideoxy-D-lyxo-hept-6-ulosonate + NAD(+) + H2O = 3-dehydroquinate + NH4(+) + NADH + H(+). Catalyzes the oxidative deamination and cyclization of 2-amino-3,7-dideoxy-D-threo-hept-6-ulosonic acid (ADH) to yield 3-dehydroquinate (DHQ), which is fed into the canonical shikimic pathway of aromatic amino acid biosynthesis. In Archaeoglobus fulgidus (strain ATCC 49558 / DSM 4304 / JCM 9628 / NBRC 100126 / VC-16), this protein is 3-dehydroquinate synthase.